The chain runs to 563 residues: MDDFAQEWPNLPRSDNGLQMDQLVGDLPTDGGFEPQTRARSNTWPCPRPEPVDELDSTKASNQQLANGDPQQAMQNANAAKKNSSRRNAWGNLSYADLITHAIGSATDKRLTLSQIYEWMVQNVSYFKDKGDSNSSAGWKNSIRHNLSLHNRFMRVQNEGTGKSSWWMLNPEAKPGKSVRRRAASMETSRYEKRRGRAKKRVEALRQAGVVGLNDATPSPSSSVSEGLDHFPESPLHSGSYQLSPDFRQRASSNASSCGRLSPIRALDLEPDWGFPVDYPNTTLTQAQVQVFDQLAGSMADELKLHTDMLQQQGFSAASGLPTQPPPPYQPPQHPQHTQGYALNGPGLSPNSVTTTMSPAYPNSEPSSDSLNTYSNVLLEAAADNAALLVQQQQQQQQQQQHASTLIGQCLEALNSEPIEEFNLENFQGGLECNVEELLHQELCYDGMLDINIPLAAVNTNATNVILTNNSTNSSSSNSNNSVAGNSSANLQLSQLQAQLQLQQQQQQQQQQQQQQQQQQQQLLLSNNNNNNNNSLDTASANLNARVQYTQPSVVTSPPSWVH.

Disordered stretches follow at residues 1 to 72 and 177 to 243; these read MDDF…DPQQ and KSVR…SYQL. Residue Thr-43 is modified to Phosphothreonine; by PKB/AKT1. Polar residues predominate over residues 58 to 72; it reads TKASNQQLANGDPQQ. The fork-head DNA-binding region spans 90–196; it reads WGNLSYADLI…ETSRYEKRRG (107 aa). Position 185 is a phosphoserine; by PKB/AKT1 (Ser-185). Residues 216–225 are compositionally biased toward polar residues; it reads ATPSPSSSVS. Residue Ser-253 is modified to Phosphoserine; by PKB/AKT1. Residues Ser-256, Ser-257, and Ser-262 each carry the phosphoserine modification. Residues 317-371 are disordered; sequence AASGLPTQPPPPYQPPQHPQHTQGYALNGPGLSPNSVTTTMSPAYPNSEPSSDSL. The span at 323–334 shows a compositional bias: pro residues; that stretch reads TQPPPPYQPPQH. Residues 349-358 are compositionally biased toward polar residues; sequence SPNSVTTTMS.

As to quaternary structure, interacts with melt.

Its subcellular location is the cytoplasm. It is found in the nucleus. In terms of biological role, transcription factor involved in the regulation of the insulin signaling pathway. Consistently activates both the downstream target Thor\d4EBP and the feedback control target InR. Involved in negative regulation of the cell cycle, modulating cell growth and proliferation. In response to cellular stresses, such as nutrient deprivation or increased levels of reactive oxygen species, foxo is activated and inhibits growth through the action of target genes such as Thor. Foxo activated in the adult fat body can regulate lifespan in adults; an insulin peptide itself may function as one secondary messenger of insulin-regulated aging. Also regulates Lip4, homolog of human acid lipases, thereby acting as a key modulator of lipid metabolism by insulin signaling and integrates insulin responses to glucose and lipid homeostasis. In Drosophila mojavensis (Fruit fly), this protein is Forkhead box protein O.